We begin with the raw amino-acid sequence, 655 residues long: p-hydroxybenzoic acid efflux pump subunit AaeB (655 aa).

Helical transmembrane passes span 13 to 33 (FAVK…HFQL), 38 to 58 (WAVL…GGEP), 69 to 89 (LRII…IAMI), 93 to 113 (LLMI…SSLV), 121 to 141 (WGLA…EPLL), 152 to 172 (EIVI…PRSI), 370 to 390 (LFWL…IAVV), 407 to 427 (FIYG…VIIP), 431 to 451 (QSML…GIEV), 459 to 479 (MGAL…TFHF), and 482 to 502 (FLDS…VILL).

The protein belongs to the aromatic acid exporter ArAE (TC 2.A.85) family.

It is found in the cell inner membrane. Its function is as follows. Forms an efflux pump with AaeA. Could function as a metabolic relief valve, allowing to eliminate certain compounds when they accumulate to high levels in the cell. This is p-hydroxybenzoic acid efflux pump subunit AaeB from Escherichia coli O7:K1 (strain IAI39 / ExPEC).